The chain runs to 394 residues: Endothelial cell-selective adhesion molecule (394 aa).

A signal peptide spans 1–29; sequence MILQAGTPETSLLRVLFLGLSTLAAFSRA. Over 30–251 the chain is Extracellular; the sequence is QMELHVPPGL…LDVMTGSKAA (222 aa). The Ig-like V-type domain maps to 37 to 146; that stretch reads PGLNKLEAVE…EGKSIGHSIK (110 aa). Residues N111, N172, N216, and N239 are each glycosylated (N-linked (GlcNAc...) asparagine). Positions 159–243 constitute an Ig-like C2-type domain; that stretch reads PSCSLQGVPY…GFAKCNVTLD (85 aa). Residues C177 and C227 are joined by a disulfide bond. The helical transmembrane segment at 252 to 272 threads the bilayer; that stretch reads VVAGAVVGTFVGLVLIAGLVL. Residues 273-394 lie on the Cytoplasmic side of the membrane; the sequence is LYQRRSKTLE…PAQSQAGSLV (122 aa). The residue at position 304 (S304) is a Phosphoserine. Polar residues-rich tracts occupy residues 304–318 and 335–347; these read SDTISKNGTLSSVTS and FTPTPSVSSQALS. Positions 304–372 are disordered; it reads SDTISKNGTL…SLTPGGVSSS (69 aa). T336 and T338 each carry phosphothreonine. Residues S340, S343, S348, and S375 each carry the phosphoserine modification.

As to quaternary structure, interacts with MAGI1. As to expression, highly expressed in the heart and lung. Weakly expressed in the kidney and skin. Expression is restricted to the vascular endothelial cells. Expressed in the kidney, heart and tongue (at protein level). Also expressed on megakaryocytes and activated platelets.

It localises to the cell junction. It is found in the adherens junction. Its subcellular location is the tight junction. The protein localises to the cell membrane. Can mediate aggregation most likely through a homophilic molecular interaction. The polypeptide is Endothelial cell-selective adhesion molecule (Esam) (Mus musculus (Mouse)).